Consider the following 142-residue polypeptide: Large-conductance mechanosensitive channel (142 aa).

Helical transmembrane passes span 15–35, 38–58, and 82–102; these read AFVMRGNVVDLAVGVIIGAAF, IVTSLVNDIFMPIIGMIIGNI, and GMFIQEIVNFLIIALCVFVAI.

It belongs to the MscL family. As to quaternary structure, homopentamer.

Its subcellular location is the cell inner membrane. Its function is as follows. Channel that opens in response to stretch forces in the membrane lipid bilayer. May participate in the regulation of osmotic pressure changes within the cell. In Fusobacterium nucleatum subsp. nucleatum (strain ATCC 25586 / DSM 15643 / BCRC 10681 / CIP 101130 / JCM 8532 / KCTC 2640 / LMG 13131 / VPI 4355), this protein is Large-conductance mechanosensitive channel.